The sequence spans 355 residues: 4-dimethylallyltryptophan N-methyltransferase easF (355 aa).

This sequence belongs to the methyltransferase superfamily. In terms of assembly, homodimer.

The catalysed reaction is 4-(3-methylbut-2-enyl)-L-tryptophan + S-adenosyl-L-methionine = 4-(3-methylbut-2-enyl)-L-abrine + S-adenosyl-L-homocysteine + H(+). Its pathway is alkaloid biosynthesis; ergot alkaloid biosynthesis. In terms of biological role, 4-dimethylallyltryptophan N-methyltransferase; part of the gene cluster that mediates the biosynthesis of fungal ergot alkaloid. DmaW catalyzes the first step of ergot alkaloid biosynthesis by condensing dimethylallyl diphosphate (DMAP) and tryptophan to form 4-dimethylallyl-L-tryptophan. The second step is catalyzed by the methyltransferase easF that methylates 4-dimethylallyl-L-tryptophan in the presence of S-adenosyl-L-methionine, resulting in the formation of 4-dimethylallyl-L-abrine. The catalase easC and the FAD-dependent oxidoreductase easE then transform 4-dimethylallyl-L-abrine to chanoclavine-I which is further oxidized by easD in the presence of NAD(+), resulting in the formation of chanoclavine-I aldehyde. Agroclavine dehydrogenase easG then mediates the conversion of chanoclavine-I aldehyde to agroclavine via a non-enzymatic adduct reaction: the substrate is an iminium intermediate that is formed spontaneously from chanoclavine-I aldehyde in the presence of glutathione. Further conversion of agroclavine to paspalic acid is a two-step process involving oxidation of agroclavine to elymoclavine and of elymoclavine to paspalic acid, the second step being performed by the elymoclavine oxidase cloA. However, cloA does not encode a functional enzyme indicating that C.fusiformis terminates its ergot alkaloid pathway at elymoclavine. The protein is 4-dimethylallyltryptophan N-methyltransferase easF of Claviceps fusiformis (Ergot fungus).